The chain runs to 207 residues: Gene 66 protein (207 aa).

In Mycobacterium (Mycobacteriophage L5), this protein is Gene 66 protein (66).